A 325-amino-acid chain; its full sequence is MVKIAVDMMGGDDAPGIVLDAVKKAVEDFKDLEIILFGDESQYNLSHERIEFRHCTEKIEMEDEPVRAIKRKKDSSMVKMAEAVKSGEADGCVSAGNTGALMSAGLFIVGRIKGVARPALVVTLPTTDGKGFVFLDVGANADAKAEHLLQYAQLGNIYAQKIRGIQNPSVSLLNIGTEAAKGNSLTKKAYDLFEKNQSFNFTGNIEAKTLMDGNVDVVVTDGYTGNMVLKNLEGTAKSIGKMLKETIMSSFKNKLAGAVLKKDLDTFAKKMDYSEYGGSVLLGLDGTVVKAHGSSNAKAFYSAIRQAKIAGEENIVQIMKDTVGE.

This sequence belongs to the PlsX family. As to quaternary structure, homodimer. Probably interacts with PlsY.

The protein resides in the cytoplasm. The catalysed reaction is a fatty acyl-[ACP] + phosphate = an acyl phosphate + holo-[ACP]. The protein operates within lipid metabolism; phospholipid metabolism. In terms of biological role, catalyzes the reversible formation of acyl-phosphate (acyl-PO(4)) from acyl-[acyl-carrier-protein] (acyl-ACP). This enzyme utilizes acyl-ACP as fatty acyl donor, but not acyl-CoA. In Staphylococcus epidermidis (strain ATCC 35984 / DSM 28319 / BCRC 17069 / CCUG 31568 / BM 3577 / RP62A), this protein is Phosphate acyltransferase.